The chain runs to 1391 residues: DNA-directed RNA polymerase subunit beta' (1391 aa).

Zn(2+) contacts are provided by Cys72, Cys74, Cys87, and Cys90. Mg(2+)-binding residues include Asp462, Asp464, and Asp466. Zn(2+)-binding residues include Cys816, Cys890, Cys897, and Cys900.

The protein belongs to the RNA polymerase beta' chain family. In terms of assembly, the RNAP catalytic core consists of 2 alpha, 1 beta, 1 beta' and 1 omega subunit. When a sigma factor is associated with the core the holoenzyme is formed, which can initiate transcription. Mg(2+) is required as a cofactor. It depends on Zn(2+) as a cofactor.

It carries out the reaction RNA(n) + a ribonucleoside 5'-triphosphate = RNA(n+1) + diphosphate. Its function is as follows. DNA-dependent RNA polymerase catalyzes the transcription of DNA into RNA using the four ribonucleoside triphosphates as substrates. The protein is DNA-directed RNA polymerase subunit beta' of Neisseria gonorrhoeae (strain NCCP11945).